Consider the following 487-residue polypeptide: Siroheme synthase (487 aa).

The interval 1 to 203 is precorrin-2 dehydrogenase /sirohydrochlorin ferrochelatase; it reads MNTFPLFFKL…GRSVEAEQAL (203 aa). NAD(+)-binding positions include 22–23 and 43–44; these read EV and PQ. Serine 128 carries the phosphoserine modification. The interval 229-487 is uroporphyrinogen-III C-methyltransferase; it reads GEVYIVGAGP…DQQAHALNML (259 aa). Residue proline 238 participates in S-adenosyl-L-methionine binding. Aspartate 261 functions as the Proton acceptor in the catalytic mechanism. The Proton donor role is filled by lysine 283. S-adenosyl-L-methionine contacts are provided by residues 314–316, valine 319, 344–345, methionine 396, and alanine 425; these read GGD and TA.

This sequence in the N-terminal section; belongs to the precorrin-2 dehydrogenase / sirohydrochlorin ferrochelatase family. The protein in the C-terminal section; belongs to the precorrin methyltransferase family.

It carries out the reaction uroporphyrinogen III + 2 S-adenosyl-L-methionine = precorrin-2 + 2 S-adenosyl-L-homocysteine + H(+). The catalysed reaction is precorrin-2 + NAD(+) = sirohydrochlorin + NADH + 2 H(+). The enzyme catalyses siroheme + 2 H(+) = sirohydrochlorin + Fe(2+). Its pathway is cofactor biosynthesis; adenosylcobalamin biosynthesis; precorrin-2 from uroporphyrinogen III: step 1/1. The protein operates within cofactor biosynthesis; adenosylcobalamin biosynthesis; sirohydrochlorin from precorrin-2: step 1/1. It functions in the pathway porphyrin-containing compound metabolism; siroheme biosynthesis; precorrin-2 from uroporphyrinogen III: step 1/1. It participates in porphyrin-containing compound metabolism; siroheme biosynthesis; siroheme from sirohydrochlorin: step 1/1. Its pathway is porphyrin-containing compound metabolism; siroheme biosynthesis; sirohydrochlorin from precorrin-2: step 1/1. In terms of biological role, multifunctional enzyme that catalyzes the SAM-dependent methylations of uroporphyrinogen III at position C-2 and C-7 to form precorrin-2 via precorrin-1. Then it catalyzes the NAD-dependent ring dehydrogenation of precorrin-2 to yield sirohydrochlorin. Finally, it catalyzes the ferrochelation of sirohydrochlorin to yield siroheme. The chain is Siroheme synthase from Psychrobacter sp. (strain PRwf-1).